We begin with the raw amino-acid sequence, 426 residues long: Histidine--tRNA ligase (426 aa).

It belongs to the class-II aminoacyl-tRNA synthetase family. Homodimer.

The protein localises to the cytoplasm. It catalyses the reaction tRNA(His) + L-histidine + ATP = L-histidyl-tRNA(His) + AMP + diphosphate + H(+). The sequence is that of Histidine--tRNA ligase from Streptococcus pyogenes serotype M18 (strain MGAS8232).